Reading from the N-terminus, the 527-residue chain is Nucleobase-ascorbate transporter LPE1 (527 aa).

Helical transmembrane passes span 43 to 63 (LVML…MGGG), 68 to 88 (AIVI…QVHF), 92 to 112 (LPAV…IILS), 132 to 152 (LQGA…FGIW), 163 to 183 (AAVP…FPGV), 189 to 209 (VGLP…HLFA), 219 to 239 (AVLV…AAGA), 284 to 304 (FAML…LIAV), 361 to 383 (VIKI…AVLA), 387 to 409 (LPIF…FSLL), 427 to 447 (LFLG…FGFG), and 458 to 478 (VMVN…AYLL).

Belongs to the nucleobase:cation symporter-2 (NCS2) (TC 2.A.40) family. Highly expressed in roots.

The protein localises to the membrane. Inhibited by excess of xanthin, uric acid and ascorbic acid, and by 100 um N,N-dicyclohexylcarbodiimide and 30 um carbonyl cyanide m-chlorophenyl-hydrazone. Functionally, high affinity uric acid-xanthine transporter in A.nidulans. Binds, but cannot transport ascorbic acid. The polypeptide is Nucleobase-ascorbate transporter LPE1 (LPE1) (Zea mays (Maize)).